A 164-amino-acid chain; its full sequence is Phosphopantetheine adenylyltransferase (164 aa).

Ser-9 contacts substrate. ATP-binding positions include Ser-9–Phe-10 and His-17. 3 residues coordinate substrate: Lys-41, Val-78, and Arg-92. Residues Gly-93–Arg-95, Glu-103, and Ser-128–Thr-134 each bind ATP.

The protein belongs to the bacterial CoaD family. Homohexamer. Mg(2+) serves as cofactor.

The protein resides in the cytoplasm. It catalyses the reaction (R)-4'-phosphopantetheine + ATP + H(+) = 3'-dephospho-CoA + diphosphate. The protein operates within cofactor biosynthesis; coenzyme A biosynthesis; CoA from (R)-pantothenate: step 4/5. Functionally, reversibly transfers an adenylyl group from ATP to 4'-phosphopantetheine, yielding dephospho-CoA (dPCoA) and pyrophosphate. The sequence is that of Phosphopantetheine adenylyltransferase from Rhizobium etli (strain ATCC 51251 / DSM 11541 / JCM 21823 / NBRC 15573 / CFN 42).